The sequence spans 578 residues: DNA primase (578 aa).

Residues 40-64 (CPFHQEKTPSFTVNFEKQFYFCFGC) form a CHC2-type zinc finger. The region spanning 257 to 339 (KQILIVEGYV…GKNVKFIFLP (83 aa)) is the Toprim domain. The Mg(2+) site is built by Glu-263, Asp-307, and Asp-309.

It belongs to the DnaG primase family. Monomer. Interacts with DnaB. Zn(2+) serves as cofactor. Mg(2+) is required as a cofactor.

It catalyses the reaction ssDNA + n NTP = ssDNA/pppN(pN)n-1 hybrid + (n-1) diphosphate.. Its function is as follows. RNA polymerase that catalyzes the synthesis of short RNA molecules used as primers for DNA polymerase during DNA replication. This is DNA primase from Buchnera aphidicola subsp. Baizongia pistaciae (strain Bp).